A 938-amino-acid chain; its full sequence is Isoleucine--tRNA ligase (938 aa).

The short motif at 58–68 (PYANGSIHIGH) is the 'HIGH' region element. N6-acetyllysine is present on K183. Residue E561 coordinates L-isoleucyl-5'-AMP. The short motif at 602–606 (KMSKS) is the 'KMSKS' region element. Residue K605 coordinates ATP. Zn(2+) contacts are provided by C901, C904, C921, and C924.

This sequence belongs to the class-I aminoacyl-tRNA synthetase family. IleS type 1 subfamily. As to quaternary structure, monomer. It depends on Zn(2+) as a cofactor.

The protein localises to the cytoplasm. The enzyme catalyses tRNA(Ile) + L-isoleucine + ATP = L-isoleucyl-tRNA(Ile) + AMP + diphosphate. Functionally, catalyzes the attachment of isoleucine to tRNA(Ile). As IleRS can inadvertently accommodate and process structurally similar amino acids such as valine, to avoid such errors it has two additional distinct tRNA(Ile)-dependent editing activities. One activity is designated as 'pretransfer' editing and involves the hydrolysis of activated Val-AMP. The other activity is designated 'posttransfer' editing and involves deacylation of mischarged Val-tRNA(Ile). The sequence is that of Isoleucine--tRNA ligase from Escherichia coli O45:K1 (strain S88 / ExPEC).